A 296-amino-acid chain; its full sequence is LysM and putative peptidoglycan-binding domain-containing protein 4 (296 aa).

Topologically, residues 1–217 (MRHEELLTKT…PMDGADCGIQ (217 aa)) are extracellular. The interval 29-67 (KNGSGDSGDSSEEESHRVVLRPRGKERHKSGVHQPPQAG) is disordered. N-linked (GlcNAc...) asparagine glycosylation occurs at Asn30. The segment covering 46–59 (VVLRPRGKERHKSG) has biased composition (basic residues). The LysM domain maps to 74-118 (LQRELAQEDSLNKLALQYGCKVADIKKVNNFIREQDLYALKSVKI). A helical transmembrane segment spans residues 218-238 (WWNAVFIMLLIGIVLPVFYLV). Over 239–296 (YFKIQASGETPNSLNTTVIPNGSMAMGTVPGQAPRLAVAVPAVTSADSQFSQTTQAGS) the chain is Cytoplasmic.

The protein localises to the membrane. This chain is LysM and putative peptidoglycan-binding domain-containing protein 4 (LYSMD4), found in Homo sapiens (Human).